Reading from the N-terminus, the 387-residue chain is Glucose-1-phosphate adenylyltransferase (387 aa).

Alpha-D-glucose 1-phosphate is bound by residues Tyr-99, Gly-164, 179 to 180 (EK), and Ser-190.

This sequence belongs to the bacterial/plant glucose-1-phosphate adenylyltransferase family. As to quaternary structure, homotetramer.

It carries out the reaction alpha-D-glucose 1-phosphate + ATP + H(+) = ADP-alpha-D-glucose + diphosphate. It functions in the pathway glycan biosynthesis; glycogen biosynthesis. Its function is as follows. Involved in the biosynthesis of ADP-glucose, a building block required for the elongation reactions to produce glycogen. Catalyzes the reaction between ATP and alpha-D-glucose 1-phosphate (G1P) to produce pyrophosphate and ADP-Glc. This is Glucose-1-phosphate adenylyltransferase from Geobacillus stearothermophilus (Bacillus stearothermophilus).